A 130-amino-acid polypeptide reads, in one-letter code: Small ribosomal subunit protein uS9 (130 aa).

The tract at residues 109-130 (RVKERKKPGLKKARKARQFSKR) is disordered. Residues 111-130 (KERKKPGLKKARKARQFSKR) are compositionally biased toward basic residues.

The protein belongs to the universal ribosomal protein uS9 family.

In Mycoplasma mobile (strain ATCC 43663 / 163K / NCTC 11711) (Mesomycoplasma mobile), this protein is Small ribosomal subunit protein uS9.